Here is a 151-residue protein sequence, read N- to C-terminus: Ribosome maturation factor RimP (151 aa).

Belongs to the RimP family.

It is found in the cytoplasm. Required for maturation of 30S ribosomal subunits. The sequence is that of Ribosome maturation factor RimP from Vibrio atlanticus (strain LGP32) (Vibrio splendidus (strain Mel32)).